A 373-amino-acid chain; its full sequence is Queuine tRNA-ribosyltransferase (373 aa).

The Proton acceptor role is filled by D89. Residues D89–F93, D143, Q187, and G214 contribute to the substrate site. The segment at G245 to D251 is RNA binding. D264 functions as the Nucleophile in the catalytic mechanism. Residues T269 to R273 form an RNA binding; important for wobble base 34 recognition region. Residues C302, C304, C307, and H333 each coordinate Zn(2+).

It belongs to the queuine tRNA-ribosyltransferase family. Homodimer. Within each dimer, one monomer is responsible for RNA recognition and catalysis, while the other monomer binds to the replacement base PreQ1. Zn(2+) serves as cofactor.

The enzyme catalyses 7-aminomethyl-7-carbaguanine + guanosine(34) in tRNA = 7-aminomethyl-7-carbaguanosine(34) in tRNA + guanine. It functions in the pathway tRNA modification; tRNA-queuosine biosynthesis. Catalyzes the base-exchange of a guanine (G) residue with the queuine precursor 7-aminomethyl-7-deazaguanine (PreQ1) at position 34 (anticodon wobble position) in tRNAs with GU(N) anticodons (tRNA-Asp, -Asn, -His and -Tyr). Catalysis occurs through a double-displacement mechanism. The nucleophile active site attacks the C1' of nucleotide 34 to detach the guanine base from the RNA, forming a covalent enzyme-RNA intermediate. The proton acceptor active site deprotonates the incoming PreQ1, allowing a nucleophilic attack on the C1' of the ribose to form the product. After dissociation, two additional enzymatic reactions on the tRNA convert PreQ1 to queuine (Q), resulting in the hypermodified nucleoside queuosine (7-(((4,5-cis-dihydroxy-2-cyclopenten-1-yl)amino)methyl)-7-deazaguanosine). The protein is Queuine tRNA-ribosyltransferase of Tolumonas auensis (strain DSM 9187 / NBRC 110442 / TA 4).